The chain runs to 394 residues: Elongation factor Tu (394 aa).

One can recognise a tr-type G domain in the interval K10–I204. The tract at residues G19–T26 is G1. A GTP-binding site is contributed by G19–T26. T26 serves as a coordination point for Mg(2+). A G2 region spans residues G60–S64. A G3 region spans residues D81–G84. GTP-binding positions include D81–H85 and N136–D139. A G4 region spans residues N136–D139. The G5 stretch occupies residues S174–L176.

This sequence belongs to the TRAFAC class translation factor GTPase superfamily. Classic translation factor GTPase family. EF-Tu/EF-1A subfamily. Monomer.

It localises to the cytoplasm. The enzyme catalyses GTP + H2O = GDP + phosphate + H(+). GTP hydrolase that promotes the GTP-dependent binding of aminoacyl-tRNA to the A-site of ribosomes during protein biosynthesis. The protein is Elongation factor Tu of Rickettsia typhi (strain ATCC VR-144 / Wilmington).